Here is a 65-residue protein sequence, read N- to C-terminus: MPKMKTKRAAAKRFKVTGTGKLKRAKAFKSHILTKKSRKTKRNLRKAGYVSESQEKVMKKVLPYL.

Belongs to the bacterial ribosomal protein bL35 family.

This chain is Large ribosomal subunit protein bL35, found in Clostridium botulinum (strain Loch Maree / Type A3).